Consider the following 99-residue polypeptide: NADH-ubiquinone oxidoreductase chain 4L (99 aa).

Helical transmembrane passes span 4 to 24 (MFLMFYLSMIMFLFGCMVFVS), 29 to 49 (LLSTLLSLEYMVLSLFIFLFF), and 63 to 83 (FFLTFCVCEGVLGLSILVSMI).

Belongs to the complex I subunit 4L family.

Its subcellular location is the mitochondrion membrane. It catalyses the reaction a ubiquinone + NADH + 5 H(+)(in) = a ubiquinol + NAD(+) + 4 H(+)(out). In terms of biological role, core subunit of the mitochondrial membrane respiratory chain NADH dehydrogenase (Complex I) that is believed to belong to the minimal assembly required for catalysis. Complex I functions in the transfer of electrons from NADH to the respiratory chain. The immediate electron acceptor for the enzyme is believed to be ubiquinone. The protein is NADH-ubiquinone oxidoreductase chain 4L (mt:ND4L) of Anopheles gambiae (African malaria mosquito).